Reading from the N-terminus, the 492-residue chain is Putative transporter SVOPL (492 aa).

A run of 10 helical transmembrane segments spans residues 48–68 (IALF…IMLI), 86–106 (VALV…LFGL), 121–141 (FLWG…IWFV), 179–199 (VFWL…IPTI), 203–223 (WLIR…KFIP), 281–301 (TLQI…VILA), 348–368 (IIST…INFL), 383–403 (LFFL…FLFM), 429–449 (ALGM…APFI), and 458–478 (ILGA…SAFT).

The protein belongs to the major facilitator superfamily.

It is found in the membrane. In Homo sapiens (Human), this protein is Putative transporter SVOPL (SVOPL).